A 117-amino-acid polypeptide reads, in one-letter code: UPF0231 protein HI_1724 (117 aa).

The protein belongs to the UPF0231 family.

This is UPF0231 protein HI_1724 from Haemophilus influenzae (strain ATCC 51907 / DSM 11121 / KW20 / Rd).